The primary structure comprises 100 residues: MVNDRLYICYCDNGYILIDNTINPYCLLINGSTSPNTTTTIIINNTSNNNNNNNNNHMNWTIPIVIIVSIFILLIIGSISLYLYKKYCSKPKRVHYQLIR.

The chain crosses the membrane as a helical span at residues 62-82 (IPIVIIVSIFILLIIGSISLY).

It localises to the membrane. This is an uncharacterized protein from Dictyostelium discoideum (Social amoeba).